Reading from the N-terminus, the 2195-residue chain is Integrator complex subunit 1 (2195 aa).

The disordered stretch occupies residues 1 to 86 (MNRAKPTTVR…RPKLSSTPPL (86 aa)). Ser-13 bears the Phosphoserine mark. Residues 34–45 (GQASESKTTSTL) are compositionally biased toward polar residues. Lys-47 carries the post-translational modification N6-acetyllysine. Over residues 62–75 (SASLSGTSALTGLT) the composition is skewed to low complexity. Residue Thr-83 is modified to Phosphothreonine. Ser-87 bears the Phosphoserine mark. Residues 267–297 (LLQGEGARSGGELGAGSSPHPSLTEEEDSQT) form a disordered region. Phosphoserine is present on residues Ser-307 and Ser-926. Residues 923–947 (STASGEEDDEGESREQKAKKRQRQQ) form a disordered region. The helical transmembrane segment at 1165–1185 (HILVVHAMVILLTLGPPRSGD) threads the bilayer. Residues 1313–1347 (SLPPRRDSTEAPKPESSPEPPPGQGRTRAGTQVPV) form a disordered region. The span at 1316-1325 (PRRDSTEAPK) shows a compositional bias: basic and acidic residues. 3 positions are modified to phosphoserine: Ser-1320, Ser-1328, and Ser-1329.

This sequence belongs to the Integrator subunit 1 family. Component of the Integrator complex, composed of core subunits INTS1, INTS2, INTS3, INTS4, INTS5, INTS6, INTS7, INTS8, INTS9/RC74, INTS10, INTS11/CPSF3L, INTS12, INTS13, INTS14 and INTS15. The core complex associates with protein phosphatase 2A subunits PPP2CA and PPP2R1A, to form the Integrator-PP2A (INTAC) complex. Interacts with ESRRB, ESRRB is not a core component of the Integrator complex and this association is a bridge for the interaction with the multiprotein complex Integrator; attracts the transcriptional machinery.

It localises to the nucleus. It is found in the nucleus membrane. Component of the integrator complex, a multiprotein complex that terminates RNA polymerase II (Pol II) transcription in the promoter-proximal region of genes. The integrator complex provides a quality checkpoint during transcription elongation by driving premature transcription termination of transcripts that are unfavorably configured for transcriptional elongation: the complex terminates transcription by (1) catalyzing dephosphorylation of the C-terminal domain (CTD) of Pol II subunit POLR2A/RPB1 and SUPT5H/SPT5, (2) degrading the exiting nascent RNA transcript via endonuclease activity and (3) promoting the release of Pol II from bound DNA. The integrator complex is also involved in terminating the synthesis of non-coding Pol II transcripts, such as enhancer RNAs (eRNAs), small nuclear RNAs (snRNAs), telomerase RNAs and long non-coding RNAs (lncRNAs). Within the integrator complex, INTS1 is involved in the post-termination step: INTS1 displaces INTS3 and the SOSS factors, allowing the integrator complex to return to the closed conformation, ready to bind to the paused elongation complex for another termination cycle. Mediates recruitment of cytoplasmic dynein to the nuclear envelope, probably as component of the integrator complex. The sequence is that of Integrator complex subunit 1 from Mus musculus (Mouse).